Here is a 244-residue protein sequence, read N- to C-terminus: uncharacterized protein (244 aa).

This is an uncharacterized protein from Sulfolobus spindle-shape virus 1 (SSV1).